We begin with the raw amino-acid sequence, 92 residues long: MSNVAENNDGVYDAPTGITAPPIDELLKHVSSKYALVIFAAKRARQINSYYQQADEGVFEFVGPLVTPEAQEKPLSIAMREIEAGLLDHEEG.

The protein belongs to the RNA polymerase subunit omega family. In terms of assembly, the RNAP catalytic core consists of 2 alpha, 1 beta, 1 beta' and 1 omega subunit. When a sigma factor is associated with the core the holoenzyme is formed, which can initiate transcription.

It carries out the reaction RNA(n) + a ribonucleoside 5'-triphosphate = RNA(n+1) + diphosphate. Functionally, promotes RNA polymerase assembly. Latches the N- and C-terminal regions of the beta' subunit thereby facilitating its interaction with the beta and alpha subunits. The sequence is that of DNA-directed RNA polymerase subunit omega from Corynebacterium diphtheriae (strain ATCC 700971 / NCTC 13129 / Biotype gravis).